Reading from the N-terminus, the 230-residue chain is Flagellar L-ring protein (230 aa).

A signal peptide spans 1–15; it reads MSRLPSLSRPCLAIA. A lipid anchor (N-palmitoyl cysteine) is attached at Cys-16. Cys-16 is lipidated: S-diacylglycerol cysteine.

This sequence belongs to the FlgH family. The basal body constitutes a major portion of the flagellar organelle and consists of four rings (L,P,S, and M) mounted on a central rod.

It is found in the cell outer membrane. The protein resides in the bacterial flagellum basal body. In terms of biological role, assembles around the rod to form the L-ring and probably protects the motor/basal body from shearing forces during rotation. This chain is Flagellar L-ring protein, found in Xanthomonas axonopodis pv. citri (strain 306).